Reading from the N-terminus, the 846-residue chain is Interleukin cytokine receptor-related protein 1 (846 aa).

The N-terminal stretch at 1–25 (MFLHSPALLIWLFLFCLAGPQAVRT) is a signal peptide. At 26–418 (EPYNSTSSSS…KEDTTWTWHT (393 aa)) the chain is on the extracellular side. N-linked (GlcNAc...) asparagine glycosylation is found at Asn-29, Asn-79, Asn-186, Asn-214, Asn-339, and Asn-395. A disordered region spans residues 388-409 (EKPPATSNQTEESDGKAEKDKK). Over residues 400-409 (SDGKAEKDKK) the composition is skewed to basic and acidic residues. A helical membrane pass occupies residues 419-439 (YAITGGAIIAILFILSVCAGL). At 440–846 (KCYKKFNNKK…AFHDEVIGIH (407 aa)) the chain is on the cytoplasmic side. The region spanning 476–618 (SISVLIVYSH…IPNSLMTMTT (143 aa)) is the SEFIR domain. The interval 737-771 (GPIHVEPTEPEVLEPAEEPMEEAEEDEEDEDDVDS) is disordered. Acidic residues predominate over residues 744–771 (TEPEVLEPAEEPMEEAEEDEEDEDDVDS).

Component of a heterodimeric receptor complex composed of ilcr-1 and ilcr-2. The receptor complex interacts with actl-1 and ilc-17.1 with the interaction being mediated by ilcr-2. In terms of tissue distribution, expressed in most neurons.

It is found in the cell membrane. In terms of biological role, forms a receptor complex together with receptor ilcr-2, which upon activation acts as a modulator of neuronal activity. Binding of the ligand ilc-17.1 to the ilcr-1/2 receptor complex triggers a signaling cascade that activates the downstream signaling components actl-1, pik-1 and nfki-1, and results in increased neuronal activity in RMG interneurons in response to input from oxygen-sensing neurons. This leads to increased animal movement and promotes aggregation behavior. This Caenorhabditis elegans protein is Interleukin cytokine receptor-related protein 1.